The following is a 261-amino-acid chain: Cytochrome c oxidase subunit 3 (261 aa).

At 1–15 (MTHQTHAYHMVNPSP) the chain is on the mitochondrial matrix side. Residues 16–34 (WPLTGALSALLMTSGLAMW) traverse the membrane as a helical segment. Topologically, residues 35 to 40 (FHFNST) are mitochondrial intermembrane. A helical transmembrane segment spans residues 41–66 (LLLALGLLTNILTMYQWWRDIIREST). The Mitochondrial matrix portion of the chain corresponds to 67–72 (FQGHHT). Residues 73-105 (SIVQKGLRYGMILFIISEVFFFSGFFWAFYHSS) traverse the membrane as a helical segment. Residues 106-128 (LAPTPELGGCWPPTGIHPLNPLE) lie on the Mitochondrial intermembrane side of the membrane. A helical transmembrane segment spans residues 129–152 (VPLLNTSVLLASGVSITWAHHSLM). Over 153-155 (EGN) the chain is Mitochondrial matrix. A helical transmembrane segment spans residues 156 to 183 (RKNMLQGLFITISLGVYFTLLQASEYYE). At 184–190 (ASFTISD) the chain is on the mitochondrial intermembrane side. Residues 191–223 (GVYGSTFFVATGFHGLHVIIGSTFLIVCFLRQL) traverse the membrane as a helical segment. Residues 224-232 (KFHFTSSHH) are Mitochondrial matrix-facing. The chain crosses the membrane as a helical span at residues 233-256 (FGFEAAAWYWHFVDVVWLFLYVSI). The Mitochondrial intermembrane portion of the chain corresponds to 257 to 261 (YWWGS).

This sequence belongs to the cytochrome c oxidase subunit 3 family. As to quaternary structure, component of the cytochrome c oxidase (complex IV, CIV), a multisubunit enzyme composed of 14 subunits. The complex is composed of a catalytic core of 3 subunits MT-CO1, MT-CO2 and MT-CO3, encoded in the mitochondrial DNA, and 11 supernumerary subunits COX4I, COX5A, COX5B, COX6A, COX6B, COX6C, COX7A, COX7B, COX7C, COX8 and NDUFA4, which are encoded in the nuclear genome. The complex exists as a monomer or a dimer and forms supercomplexes (SCs) in the inner mitochondrial membrane with NADH-ubiquinone oxidoreductase (complex I, CI) and ubiquinol-cytochrome c oxidoreductase (cytochrome b-c1 complex, complex III, CIII), resulting in different assemblies (supercomplex SCI(1)III(2)IV(1) and megacomplex MCI(2)III(2)IV(2)).

It localises to the mitochondrion inner membrane. The enzyme catalyses 4 Fe(II)-[cytochrome c] + O2 + 8 H(+)(in) = 4 Fe(III)-[cytochrome c] + 2 H2O + 4 H(+)(out). Functionally, component of the cytochrome c oxidase, the last enzyme in the mitochondrial electron transport chain which drives oxidative phosphorylation. The respiratory chain contains 3 multisubunit complexes succinate dehydrogenase (complex II, CII), ubiquinol-cytochrome c oxidoreductase (cytochrome b-c1 complex, complex III, CIII) and cytochrome c oxidase (complex IV, CIV), that cooperate to transfer electrons derived from NADH and succinate to molecular oxygen, creating an electrochemical gradient over the inner membrane that drives transmembrane transport and the ATP synthase. Cytochrome c oxidase is the component of the respiratory chain that catalyzes the reduction of oxygen to water. Electrons originating from reduced cytochrome c in the intermembrane space (IMS) are transferred via the dinuclear copper A center (CU(A)) of subunit 2 and heme A of subunit 1 to the active site in subunit 1, a binuclear center (BNC) formed by heme A3 and copper B (CU(B)). The BNC reduces molecular oxygen to 2 water molecules using 4 electrons from cytochrome c in the IMS and 4 protons from the mitochondrial matrix. This chain is Cytochrome c oxidase subunit 3 (MT-CO3), found in Equus asinus (Donkey).